We begin with the raw amino-acid sequence, 377 residues long: Acetyltransferase ple2 (377 aa).

Residues 1–27 (MKPFSPELLVLSFILLVLSCAIRPAKG) form the signal peptide. 4 consecutive transmembrane segments (helical) span residues 29–49 (WILW…TTGD), 56–76 (IANN…LTDV), 176–196 (IAAW…ALSL), and 258–278 (PALY…HAIG).

This sequence belongs to the wax synthase family.

Its subcellular location is the membrane. The protein operates within secondary metabolite biosynthesis; terpenoid biosynthesis. Its function is as follows. Acetyltransferase; part of the gene cluster that mediates the biosynthesis of pleuromutilin, a tricyclic diterpene showing antibacterial properties. The geranylgeranyl diphosphate (GGPP) synthase ple4 catalyzes the first step in pleuromutilin biosynthesis. GGPP is then substrate of the premutilin synthase (PS) ple3 to yield premutilin. Premutilin synthase is a bifunctional enzyme composed of the fusion of a class II diterpene cyclase (DTC) and a class I diterpene synthase (DTS), with the corresponding domains and active sites containing characteristic aspartate-rich motifs. GGPP is first converted to mutildienyl-diphosphate (MPP) at the class II DTC site. MPP is subsequently further cyclized at the class I DTS site, followed by a 1,5-hydride shift and addition of water prior to terminating deprotonation, to yield premutilin. The cytochrome P450 monooxygenases ple5 and ple6 hydroxylate premutilin at C-11 and C-3, respectively, producing 11-hydroxypremutilin and 3-hydroxypremutilin. The combination of the actions of both ple5 and ple6 leads to the production of 3,11-dihydroxypremutilin. The short chain dehydrogenase ple7 further converts 3,11-dihydroxypremutilin into mutilin. The acetyltransferase ple2 then acetylates mutilin to produce 14-O-acetylmutilin. Finally, the cytochrome P450 monooxygenase ple1 catalyzes hydroxylation on the alpha position of the acetyl side chain of 14-O-acetylmutilin to yield pleuromutilin. In Rhodocybe pseudopiperita (Clitopilus pseudopiperitus), this protein is Acetyltransferase ple2.